Consider the following 380-residue polypeptide: Cytochrome b (380 aa).

4 helical membrane-spanning segments follow: residues 34–54, 78–99, 114–134, and 179–199; these read FGSLLAVCLITQILTGLLLAM, WLLHNLHANGASFFFICIFLHI, WNTGVVLLLTLMATAFVGYVL, and FFALHFLLPFMIAGITIIHLM. Positions 84 and 98 each coordinate heme b. H183 and H197 together coordinate heme b. H202 is an a ubiquinone binding site. Transmembrane regions (helical) follow at residues 227 to 247, 289 to 309, 321 to 341, and 348 to 368; these read IKDILGLTIMLTPLLTLTLFS, LGGVLALAASVLILLLIPFLH, LSQTLFWLLVANLLILTWVGS, and FIIIGQMASLSYFTILLILFP.

Belongs to the cytochrome b family. In terms of assembly, the cytochrome bc1 complex contains 11 subunits: 3 respiratory subunits (MT-CYB, CYC1 and UQCRFS1), 2 core proteins (UQCRC1 and UQCRC2) and 6 low-molecular weight proteins (UQCRH/QCR6, UQCRB/QCR7, UQCRQ/QCR8, UQCR10/QCR9, UQCR11/QCR10 and a cleavage product of UQCRFS1). This cytochrome bc1 complex then forms a dimer. Heme b is required as a cofactor.

It is found in the mitochondrion inner membrane. Functionally, component of the ubiquinol-cytochrome c reductase complex (complex III or cytochrome b-c1 complex) that is part of the mitochondrial respiratory chain. The b-c1 complex mediates electron transfer from ubiquinol to cytochrome c. Contributes to the generation of a proton gradient across the mitochondrial membrane that is then used for ATP synthesis. The polypeptide is Cytochrome b (MT-CYB) (Meleagris gallopavo (Wild turkey)).